A 658-amino-acid polypeptide reads, in one-letter code: DNA mismatch repair protein MutL (658 aa).

Basic and acidic residues predominate over residues 114–130 (RQEDSSHATQVKAEDGK). 3 disordered regions span residues 114–137 (RQED…PTAA), 369–401 (DYPT…APQQ), and 438–457 (FGNM…LSDG).

It belongs to the DNA mismatch repair MutL/HexB family.

Its function is as follows. This protein is involved in the repair of mismatches in DNA. It is required for dam-dependent methyl-directed DNA mismatch repair. May act as a 'molecular matchmaker', a protein that promotes the formation of a stable complex between two or more DNA-binding proteins in an ATP-dependent manner without itself being part of a final effector complex. This chain is DNA mismatch repair protein MutL, found in Neisseria meningitidis serogroup A / serotype 4A (strain DSM 15465 / Z2491).